A 251-amino-acid polypeptide reads, in one-letter code: Squamosa promoter-binding-like protein 4 (251 aa).

A compositionally biased stretch (pro residues) spans 1 to 15 (MDWMPPPKPTSPRSP). The disordered stretch occupies residues 1–64 (MDWMPPPKPT…RAEEGGGGGG (64 aa)). Low complexity predominate over residues 24-43 (AAVPGSSSGEVSAAAAAAAA). An SBP-type zinc finger spans residues 65-142 (EVRCQVEGCG…YDHNARRRKP (78 aa)). 8 residues coordinate Zn(2+): Cys68, Cys73, Cys90, His93, Cys109, Cys112, His116, and Cys128. The Bipartite nuclear localization signal motif lies at 125–141 (KRSCRRRLYDHNARRRK).

Expressed in stems, leaf sheaths, and young panicles.

Its subcellular location is the nucleus. Functionally, trans-acting factor that binds specifically to the consensus nucleotide sequence 5'-TNCGTACAA-3'. May be involved in panicle development. This chain is Squamosa promoter-binding-like protein 4 (SPL4), found in Oryza sativa subsp. japonica (Rice).